The sequence spans 529 residues: MKCLEGLHLQQRPSKFSVSLAPEEGLVCAFQLEEEKENEDECVCSDQAPEVKEEGCGLGDPAIVSAFQNTQVPQQRGLHSSHRVKVSGALGMSSASLHFMWQSVFPRASSPAHHFGPQQPSPDPFLFYSPLTPWPPKLSLPSHLTQLHPQHQQILQQQQRWRRRRSPTARSVPAQKPWSREPAASDAYANLMTRKEKDWVIRVQMVQLQSENPRLDDYYYQKYYQKLEKRQADKELLGQKTRAESLKLVTPYIQKPEVYESVVRIEGSLGQVAVSTCFSPRRAIDAVSHGTQEQDTGAASSQRLRVLSQIEKMFLQLLKIEEGQNDGLPQLYHTREQSSQVEKLFQALKTQEQNNLEEAADNLLQVLSVRKGKVLVARLLPFLPPDQAVSLLLYITYHLPLLIQRDMADQGLHMLFKPLGKYISHLTFHQLLHAMQGLMLLSPGSSERPVSVVLQNQFGISLLYALLSHGEQLVSLDPSLRSSSDCATWTDLVILIAWEIAQLPAASLAEPLAFPRNLLPCSAITWTSN.

The disordered stretch occupies residues 153 to 183 (QILQQQQRWRRRRSPTARSVPAQKPWSREPA).

It belongs to the PAT1 family. In terms of assembly, interacts with LSM1.

It is found in the cytoplasm. The protein localises to the nucleus. In terms of biological role, RNA-binding protein that acts as a translational repressor. The protein is Protein PAT1 homolog 2 (Patl2) of Mus musculus (Mouse).